The chain runs to 209 residues: Pyridoxine/pyridoxamine 5'-phosphate oxidase (209 aa).

Substrate-binding positions include 5–8 (REEY) and Lys-63. FMN contacts are provided by residues 58–63 (RVVLLK), 73–74 (FT), Arg-79, Lys-80, and Gln-102. Positions 120, 124, and 128 each coordinate substrate. Residues 137 to 138 (QS) and Trp-181 contribute to the FMN site. 187–189 (RLH) is a binding site for substrate. Arg-191 is a binding site for FMN.

The protein belongs to the pyridoxamine 5'-phosphate oxidase family. As to quaternary structure, homodimer. The cofactor is FMN.

It catalyses the reaction pyridoxamine 5'-phosphate + O2 + H2O = pyridoxal 5'-phosphate + H2O2 + NH4(+). It carries out the reaction pyridoxine 5'-phosphate + O2 = pyridoxal 5'-phosphate + H2O2. Its pathway is cofactor metabolism; pyridoxal 5'-phosphate salvage; pyridoxal 5'-phosphate from pyridoxamine 5'-phosphate: step 1/1. It functions in the pathway cofactor metabolism; pyridoxal 5'-phosphate salvage; pyridoxal 5'-phosphate from pyridoxine 5'-phosphate: step 1/1. Catalyzes the oxidation of either pyridoxine 5'-phosphate (PNP) or pyridoxamine 5'-phosphate (PMP) into pyridoxal 5'-phosphate (PLP). This is Pyridoxine/pyridoxamine 5'-phosphate oxidase from Alcanivorax borkumensis (strain ATCC 700651 / DSM 11573 / NCIMB 13689 / SK2).